The chain runs to 255 residues: Putative ankyrin repeat protein R880 (255 aa).

ANK repeat units follow at residues 79 to 109 (SGIN…DIHY), 110 to 139 (KTDY…NINT), 141 to 169 (DCYA…NVRK), 171 to 199 (RDLA…DVRS), and 201 to 229 (KNYA…NFRV).

The protein is Putative ankyrin repeat protein R880 of Acanthamoeba polyphaga (Amoeba).